A 138-amino-acid polypeptide reads, in one-letter code: Hydrogenase maturation factor HypA (138 aa).

His2 provides a ligand contact to Ni(2+). Zn(2+) contacts are provided by Cys73, Cys76, Cys110, and Cys113.

The protein belongs to the HypA/HybF family.

Functionally, involved in the maturation of [NiFe] hydrogenases. Required for nickel insertion into the metal center of the hydrogenase. The polypeptide is Hydrogenase maturation factor HypA (Thermococcus sibiricus (strain DSM 12597 / MM 739)).